The primary structure comprises 1435 residues: Neuropathy target esterase sws (1435 aa).

At 1–35 the chain is on the lumenal side; that stretch reads MDVLELLRVSGSNMYYSTFLADAWCYYISNQITMT. The helical transmembrane segment at 36–56 threads the bilayer; the sequence is MYLYCALGVLSMLFIGWFVYF. The Cytoplasmic portion of the chain corresponds to 57-1435; that stretch reads KRLARLRLRH…NTNNETKNYL (1379 aa). 176–303 serves as a coordination point for a nucleoside 3',5'-cyclic phosphate; sequence IFGHFEKPIF…IRVIQVIMIR (128 aa). Over residues 361-372 the composition is skewed to low complexity; it reads AASGTAGSTHTA. 2 disordered regions span residues 361–405 and 422–452; these read AASG…ELSG and NSYPPLYHQRESDGNLSTRRGSITQQEQPEV. Positions 435–449 are enriched in polar residues; sequence GNLSTRRGSITQQEQ. Phosphoserine is present on S443. Residues 474–601 and 590–717 contribute to the a nucleoside 3',5'-cyclic phosphate site; these read ELGL…VVRR and IVLD…LSHR. One can recognise a PNPLA domain in the interval 944–1110; that stretch reads LVLGGGGARG…VNNLPGHLWR (167 aa). The GXGXXG signature appears at 948–953; the sequence is GGGARG. Positions 975-979 match the GXSXG motif; sequence GVSIG. S977 serves as the catalytic Nucleophile. The active-site Proton acceptor is the D1097. Residues 1097–1099 carry the DGA/G motif; the sequence is DGG. The interval 1308 to 1435 is disordered; the sequence is MDKATQSTPP…NTNNETKNYL (128 aa). The span at 1311 to 1322 shows a compositional bias: polar residues; that stretch reads ATQSTPPLQSKA. 2 stretches are compositionally biased toward basic and acidic residues: residues 1330 to 1361 and 1393 to 1424; these read SKEEARHEWEIKREQKQELAREQELERERELS and MDKKKTKDNDRDEVRGSAEDTGKEKEEDKENR. Residues 1425-1435 show a composition bias toward polar residues; that stretch reads SNTNNETKNYL.

Belongs to the NTE family. In terms of assembly, interacts with Pka-C3; interaction inhibits the catalytic function of Pka-C3 and the esterase activity of sws.

The protein resides in the endoplasmic reticulum membrane. The catalysed reaction is a 1-acyl-sn-glycero-3-phosphocholine + H2O = sn-glycerol 3-phosphocholine + a fatty acid + H(+). In terms of biological role, phospholipase B that deacylates intracellular phosphatidylcholine (PtdCho), generating glycerophosphocholine (GroPtdCho). This deacylation occurs at both sn-2 and sn-1 positions of PtdCho. Its specific chemical modification by certain organophosphorus (OP) compounds leads to distal axonopathy. Plays a role in the signaling mechanism between neurons and glia that regulates glia wrapping during development of the adult brain. Essential for membrane lipid homeostasis and cell survival in both neurons and glia of the adult brain. This chain is Neuropathy target esterase sws, found in Drosophila persimilis (Fruit fly).